Consider the following 259-residue polypeptide: Probable dihydroorotate dehydrogenase B (NAD(+)), electron transfer subunit (259 aa).

One can recognise an FAD-binding FR-type domain in the interval 1–89 (MLPLNATITQ…RGPFGKGFTL (89 aa)). [2Fe-2S] cluster-binding residues include cysteine 211, cysteine 216, cysteine 219, and cysteine 229.

Belongs to the PyrK family. Heterotetramer of 2 PyrK and 2 PyrD type B subunits. Requires [2Fe-2S] cluster as cofactor. The cofactor is FAD.

Its pathway is pyrimidine metabolism; UMP biosynthesis via de novo pathway; orotate from (S)-dihydroorotate (NAD(+) route): step 1/1. Responsible for channeling the electrons from the oxidation of dihydroorotate from the FMN redox center in the PyrD type B subunit to the ultimate electron acceptor NAD(+). The protein is Probable dihydroorotate dehydrogenase B (NAD(+)), electron transfer subunit of Methanosarcina mazei (strain ATCC BAA-159 / DSM 3647 / Goe1 / Go1 / JCM 11833 / OCM 88) (Methanosarcina frisia).